Consider the following 386-residue polypeptide: DNA-directed RNA polymerase subunit Rpo1C (386 aa).

This sequence belongs to the RNA polymerase beta' chain family. Part of the RNA polymerase complex.

It localises to the cytoplasm. It carries out the reaction RNA(n) + a ribonucleoside 5'-triphosphate = RNA(n+1) + diphosphate. In terms of biological role, DNA-dependent RNA polymerase (RNAP) catalyzes the transcription of DNA into RNA using the four ribonucleoside triphosphates as substrates. Forms part of the jaw domain. The chain is DNA-directed RNA polymerase subunit Rpo1C from Methanococcus maripaludis (strain DSM 14266 / JCM 13030 / NBRC 101832 / S2 / LL).